Consider the following 237-residue polypeptide: Aspartate/glutamate leucyltransferase (237 aa).

This sequence belongs to the R-transferase family. Bpt subfamily.

It localises to the cytoplasm. It carries out the reaction N-terminal L-glutamyl-[protein] + L-leucyl-tRNA(Leu) = N-terminal L-leucyl-L-glutamyl-[protein] + tRNA(Leu) + H(+). The enzyme catalyses N-terminal L-aspartyl-[protein] + L-leucyl-tRNA(Leu) = N-terminal L-leucyl-L-aspartyl-[protein] + tRNA(Leu) + H(+). Functions in the N-end rule pathway of protein degradation where it conjugates Leu from its aminoacyl-tRNA to the N-termini of proteins containing an N-terminal aspartate or glutamate. The polypeptide is Aspartate/glutamate leucyltransferase (Marinobacter nauticus (strain ATCC 700491 / DSM 11845 / VT8) (Marinobacter aquaeolei)).